Consider the following 360-residue polypeptide: G-protein coupled receptor 15 (360 aa).

Over 1-33 the chain is Extracellular; sequence MEPATALLIVDYYDYTSPDPPFLETPSHLSYTS. Residues 34–54 traverse the membrane as a helical segment; sequence VFLPIFYTVVFLTGVVGNFIL. The Cytoplasmic portion of the chain corresponds to 55–69; it reads MIALHFKRGNRRLID. A helical transmembrane segment spans residues 70–90; it reads IFIINLAASDFIFLVTVPLWM. Over 91–120 the chain is Extracellular; it reads DKEASLGLWRTGSFLCKGSSYVISVNMHCS. The helical transmembrane segment at 121–141 threads the bilayer; it reads VFLLTCMSMDRYLAIMHPALA. Topologically, residues 142–149 are cytoplasmic; that stretch reads KRLRRRSS. The helical transmembrane segment at 150 to 170 threads the bilayer; the sequence is AYAVCAVVWIISCVLGLPTLL. Residues 171 to 192 lie on the Extracellular side of the membrane; the sequence is SRELTHIEGKPYCAEKKPTSLK. The helical transmembrane segment at 193–213 threads the bilayer; that stretch reads LMWGLVALITTFFVPLLSIVT. The Cytoplasmic segment spans residues 214-239; it reads CYCCITRRLCAHYQQSGKHNKKLKKS. The chain crosses the membrane as a helical span at residues 240-260; the sequence is IKIVIIAVAAFTVSWVPFNTF. Residues 261-284 lie on the Extracellular side of the membrane; sequence KLLAIVSGFQPEGLFHSEALQLAM. A helical transmembrane segment spans residues 285–305; that stretch reads NVTGPLAFASSCVNPLIYYVF. The Cytoplasmic portion of the chain corresponds to 306–360; sequence DSYIRRAIVRCLCPCLKTHNFGSSTETSDSHLTKALSNFIHAEDFIRRRKRSVSL. Position 359 is a phosphoserine (serine 359).

Belongs to the G-protein coupled receptor 1 family. Interacts with adapter YWHAE; this interaction promotes ER-to-Golgi transport of GPR15. Phosphorylation is necessary for YWHAE binding and efficient surface expression. In terms of processing, O-glycosylated. Sialylated O-glycans in the N-terminal tail inhibits binding of GPR15LG. Post-translationally, sulfation is required for efficient binding of GPR15LG. Highly expressed in gut tissues and lymphoid organs, largely restricted to TCRbeta+ cells. Expressed in fetal thymic dendritic epidermal T-cell precursors.

Its subcellular location is the cell membrane. G protein-coupled receptor that plays an important role in immune homeostasis. Acts via its natural ligand GPR15LG, a chemokine-like polypeptide strongly expressed in gastrointestinal tissues. GPR15-GPR15LG signaling axis regulates intestinal homeostasis and inflammation through the migration of immune cells. Controls thereby the specific homing of T-cells, particularly FOXP3+ regulatory T-cells (Tregs), to the large intestine lamina propria. Also required for skin localization of thymus-derived dendritic epidermal T-cells. Plays an important role in mediating cytoprotective function as well as angiogenesis of thrombomodulin. Mechanistically, preferentially signals through the Gi/o pathway to inhibit adenylate cyclase activity and activate a phosphatidylinositol-calcium second messenger system that regulates the release of Ca(2+) ions from intracellular stores. The sequence is that of G-protein coupled receptor 15 (Gpr15) from Mus musculus (Mouse).